A 1638-amino-acid chain; its full sequence is MSSTSSNPDDGDTTEQSQLGLDTVIKKLEDTILSPMARREDRALTVRGEGQRASPTPVPARIREIVSSSLGEEPLSGLREPPATTSHAREESELLQEELTRLEDLLAQADAEREELASRCHMVSQRLQARLDTTEARLRKSELEHSMDLEEALSRLEASQQRSMGLSQVNTLLRQQLEHMQKANDTLARELTRATHSLVHLQRKLELQESQRLSLRQPRDILPLWRQAKALQTHLAELRASTERGLTDVQADMTRTAQRLHMACLNLDSHLRLTASSMTSDLEQRLREQAREMLQLQGQWAAEKVALQARLSEQTLLVEKLSVQKEQGERAILTLKSDIQRLKSRRSGGQLAVDELRDEVESLHHVLASIKEVAQSDAMCPELAWSSSIEVREAQARLRSPPRSVSPHQRMSPARTSSPTSLHPALQAVQAAIERRQQREQELRLRLESSQEEAAGLREQLSGYRQELRTSQRLLQDRAQEHEDLLGQLEAQRQEAQLSQASVHLLEREKEALETTMEELRAKADIREAETQKLEVTNAELRRSLLLRAEQKAELAQQSERSLRELEASQGRVEQLEEKVSGLRKELATSREALSSMQLQRDILETEKESLHGALAQAESGNADLELLVTRLKAEGMEQQDSLAKMAALLEGLSQDKGTLNHLALQLEQERDQLREQQKMLQQEQAGMREQLTQTGQQLGLIRAERRSLKETCGHLEQKQDHLEKQVVLLGQENAQLREQVGQVTNKKQALEKQLAQSLQDQEAQMDILQEALHEKNTLSEERAQLLAKQEALERHSELVTKEAADLRAERNSLENSLFEAQRLTTQLQTQQEQLEGKAEAAQLARRALQVEIERLKSDWEVRETKLQLHLGQLQQQAAQQEQEAQLALERQELAHTEDLARLHREKDTLSLSLAEEKEAAARWMEQQKELLTRSAADREALQGEIQNLKQERDESLLQLEHEMQQALSLKDAEKSLLSKELSGAHRELERARQEAQNQQVQAEATVTTMTKELRTLQVQFEEAISTHQREADTLREKLREIAAERSSVRREAEELQAQLNVAHERLAELRQELQASEESREGLQREALGARRALEDEVQEKDVLQHSNTELRASIHRAEQEKASLKRSKEEQEQKLLLLQEAQVAAQKEAYELRTRLQELERAQRDTRRKLQERHRQVRTLEAENQRKRQEVSDLQAQVSRDAQHRQKNLQESLELQRQVAEAQAAHDGVQKEVLGLRQKLAEVEASGETRAKQLEGHLCESQRAEQTLQAELCRITRKLQEASNQADSLQRSLDNACSRVHVLEQELAKAEGARCNAEAQLGRLWSTLCSGLGQSRNLLASPKRPHSPTTGSSQTRPGRQRTSPPTRSYSPARWPSPVPVDPKSEVIDVAFVRDALRDLVQGLLEAQQERDNSGIQVANLSSQLSEAERERLRLQSRVEQLQRDLADAEEGQRRAESALQSAQAARALQKEALQRLETEHLASARAAGQERRRLQEQVDTLRQALEESSRPSQSLADKGRLLEQPLQQVLPHSRRDRAERRALREQTTSLRTERARLQGELAALRTRLIQTEQETLKKEEDRAMLGAKKELLLQSLSHLHQEVDGALRQSQQLQVASLKKRLDKEVWQRQQQAHSD.

A compositionally biased stretch (polar residues) spans 1-20; it reads MSSTSSNPDDGDTTEQSQLG. Disordered regions lie at residues 1 to 21, 39 to 92, 396 to 423, and 1168 to 1213; these read MSSTSSNPDDGDTTEQSQLGL, REDR…REES, ARLRSPPRSVSPHQRMSPARTSSPTSLH, and TRRK…NLQE. Low complexity predominate over residues 67-82; it reads SSSLGEEPLSGLREPP. Residues 85–144 are a coiled coil; sequence TSHAREESELLQEELTRLEDLLAQADAEREELASRCHMVSQRLQARLDTTEARLRKSELE. Positions 406–421 are enriched in polar residues; sequence SPHQRMSPARTSSPTS. Coiled-coil stretches lie at residues 426–1234 and 1281–1315; these read LQAV…VQKE and LQEASNQADSLQRSLDNACSRVHVLEQELAKAEGA. A compositionally biased stretch (basic and acidic residues) spans 1180 to 1193; it reads RTLEAENQRKRQEV. Disordered regions lie at residues 1338–1383 and 1506–1551; these read RNLL…VPVD and ALEE…QTTS. The segment covering 1349 to 1371 has biased composition (polar residues); it reads SPTTGSSQTRPGRQRTSPPTRSY. Coiled-coil stretches lie at residues 1412–1506 and 1542–1576; these read RDNS…LRQA and RRALREQTTSLRTERARLQGELAALRTRLIQTEQE.

Belongs to the rootletin family.

In Mus musculus (Mouse), this protein is Ciliary rootlet coiled-coil protein 2.